A 953-amino-acid polypeptide reads, in one-letter code: Eukaryotic translation initiation factor 3 subunit A (953 aa).

The 182-residue stretch at 323-504 (LQKMASHVLL…KSISFGLDLH (182 aa)) folds into the PCI domain. 3 coiled-coil regions span residues 593–642 (QERE…KRQA), 670–704 (MNAD…VDYF), and 732–877 (ENQE…LEER). The segment at 603-623 (IKKQKVENQEAEQKRLDEERR) is disordered. Disordered stretches follow at residues 810-861 (ERKK…EIDR) and 893-953 (GWGD…ITMS). Basic and acidic residues-rich tracts occupy residues 812-861 (KKIE…EIDR), 895-919 (GDHE…RGGD), and 928-953 (WQRE…ITMS).

It belongs to the eIF-3 subunit A family. As to quaternary structure, component of the eukaryotic translation initiation factor 3 (eIF-3) complex.

The protein resides in the cytoplasm. Functionally, RNA-binding component of the eukaryotic translation initiation factor 3 (eIF-3) complex, which is involved in protein synthesis of a specialized repertoire of mRNAs and, together with other initiation factors, stimulates binding of mRNA and methionyl-tRNAi to the 40S ribosome. The eIF-3 complex specifically targets and initiates translation of a subset of mRNAs involved in cell proliferation. The chain is Eukaryotic translation initiation factor 3 subunit A from Nematostella vectensis (Starlet sea anemone).